The sequence spans 567 residues: Oxygen-dependent choline dehydrogenase (567 aa).

An FAD-binding site is contributed by aspartate 6 to glutamate 35. The Proton acceptor role is filled by histidine 475.

This sequence belongs to the GMC oxidoreductase family. FAD serves as cofactor.

It catalyses the reaction choline + A = betaine aldehyde + AH2. The catalysed reaction is betaine aldehyde + NAD(+) + H2O = glycine betaine + NADH + 2 H(+). The protein operates within amine and polyamine biosynthesis; betaine biosynthesis via choline pathway; betaine aldehyde from choline (cytochrome c reductase route): step 1/1. Functionally, involved in the biosynthesis of the osmoprotectant glycine betaine. Catalyzes the oxidation of choline to betaine aldehyde and betaine aldehyde to glycine betaine at the same rate. In Pseudomonas fluorescens (strain Pf0-1), this protein is Oxygen-dependent choline dehydrogenase.